The following is a 61-amino-acid chain: UPF0391 membrane protein Bpro_0066 (61 aa).

The next 2 membrane-spanning stretches (helical) occupy residues 5–25 (AIIF…GVAA) and 33–53 (ILFG…ALGV).

The protein belongs to the UPF0391 family.

Its subcellular location is the cell membrane. This Polaromonas sp. (strain JS666 / ATCC BAA-500) protein is UPF0391 membrane protein Bpro_0066.